We begin with the raw amino-acid sequence, 161 residues long: Aklanonic acid methyl ester cyclase DauD (161 aa).

Gln106 contributes to the substrate binding site. The tract at residues 137-161 (WPTPEGWRPCPPPPRRRHDRSTDTP) is disordered.

It belongs to the polyketide cyclase DnrD family. As to quaternary structure, homotetramer.

The catalysed reaction is methyl aklanonate = aklaviketone. It functions in the pathway antibiotic biosynthesis; daunorubicin biosynthesis. Its pathway is antibiotic biosynthesis; carminomycin biosynthesis. It participates in antibiotic biosynthesis; rhodomycin biosynthesis. The protein operates within antibiotic biosynthesis; aclacinomycin biosynthesis. In terms of biological role, involved in the biosynthesis of aklavinone which is an important precursor common to the formation of the clinically significant anthracyclines such as carminomycin, daunorubicin (daunomycin), rhodomycin, aclacinomycin T (aklavin) and aclacinomycin A (aclarubicin). These compounds are aromatic polyketide antibiotics that exhibit high cytotoxicity and are widely applied in the chemotherapy of a variety of cancers. Catalyzes the cyclization of aklanonic acid methyl ester to yield aklaviketone. This Streptomyces sp. (strain C5) protein is Aklanonic acid methyl ester cyclase DauD (dauD).